Reading from the N-terminus, the 372-residue chain is Cytochrome b (372 aa).

Helical transmembrane passes span 25–45, 69–90, 105–125, and 170–190; these read FGSM…FLAI, WTMQ…YIHI, WLSG…GYVL, and FFAL…IHII. Heme b contacts are provided by H75 and H89. Residues H174 and H188 each contribute to the heme b site. Residue H193 participates in a ubiquinone binding. 4 helical membrane-spanning segments follow: residues 218 to 238, 280 to 300, 312 to 332, and 339 to 358; these read YKDI…MAFA, LGGT…PFTH, LAQM…WTAT, and FILI…IINP.

This sequence belongs to the cytochrome b family. In terms of assembly, the cytochrome bc1 complex contains 3 respiratory subunits (MT-CYB, CYC1 and UQCRFS1), 2 core proteins (UQCRC1 and UQCRC2) and probably 6 low-molecular weight proteins. The cofactor is heme b.

The protein resides in the mitochondrion inner membrane. Its function is as follows. Component of the ubiquinol-cytochrome c reductase complex (complex III or cytochrome b-c1 complex) that is part of the mitochondrial respiratory chain. The b-c1 complex mediates electron transfer from ubiquinol to cytochrome c. Contributes to the generation of a proton gradient across the mitochondrial membrane that is then used for ATP synthesis. This chain is Cytochrome b (MT-CYB), found in Acanthophis antarcticus (Common death adder).